Consider the following 568-residue polypeptide: N66 matrix protein (568 aa).

Residues 1 to 22 form the signal peptide; the sequence is MWRMTTLLHLTALLVLIPLCHC. One can recognise an Alpha-carbonic anhydrase domain in the interval 55–567; the sequence is AGFSYNRDIC…KHPLRVYKNS (513 aa). Positions 154, 156, and 179 each coordinate Zn(2+). A disordered region spans residues 259–421; the sequence is NGNNGNNGNG…NGYNGDNGNS (163 aa). The segment covering 280–290 has biased composition (gly residues); that stretch reads GNNGNGNGNNG. The segment covering 291 to 318 has biased composition (low complexity); it reads YNGNNGYNGNNGNNGNGNNDNNGNDNNG. 2 stretches are compositionally biased toward gly residues: residues 319-352 and 362-380; these read NNGGNGNNGNNGNGNNGNNGNGNNGNNGGNGNNG and NGNGNNGNNGGNGNNGNNG. N-linked (GlcNAc...) asparagine glycosylation is present at asparagine 389. Residues 390-413 show a composition bias toward gly residues; that stretch reads GSNGNNGGNGNNGNNGDNGNGDNG. Residue 506 to 507 coordinates substrate; the sequence is TT. A glycan (N-linked (GlcNAc...) asparagine) is linked at asparagine 511.

It belongs to the alpha-carbonic anhydrase family. In terms of assembly, homooligomer; disulfide-linked. May also be disulfide-linked to insoluble organic matrix. Requires Zn(2+) as cofactor. In terms of tissue distribution, expressed in both the dorsal region of the mantle and the mantle edge. Is dispersed in calcium carbonate and also linked by disulfide bonds to the organic core of nacre.

It localises to the secreted. Its subcellular location is the extracellular space. The protein resides in the extracellular matrix. It catalyses the reaction hydrogencarbonate + H(+) = CO2 + H2O. Acts as a negative regulator for calcification in the shells of mollusks. May function both as a calcium concentrator and as a carbonic anhydrase required for production of carbonate ions, which are assembled to CaCO(3) at mineralization sites. Is important for shell formation in both the calcitic prismatic layer and the aragonitic nacreous layer. The chain is N66 matrix protein from Pinctada maxima (Silver-lipped pearl oyster).